Reading from the N-terminus, the 149-residue chain is NADH-ubiquinone oxidoreductase chain 6 (149 aa).

4 helical membrane passes run 23-43 (ILML…FYFI), 51-71 (MMMI…MISL), 83-103 (LSVT…MTKL), and 114-134 (VNFV…LTII).

It belongs to the complex I subunit 6 family.

The protein localises to the mitochondrion membrane. The catalysed reaction is a ubiquinone + NADH + 5 H(+)(in) = a ubiquinol + NAD(+) + 4 H(+)(out). Its function is as follows. Core subunit of the mitochondrial membrane respiratory chain NADH dehydrogenase (Complex I) that is believed to belong to the minimal assembly required for catalysis. Complex I functions in the transfer of electrons from NADH to the respiratory chain. The immediate electron acceptor for the enzyme is believed to be ubiquinone. In Rhipicephalus sanguineus (Brown dog tick), this protein is NADH-ubiquinone oxidoreductase chain 6 (ND6).